We begin with the raw amino-acid sequence, 336 residues long: Protein DIA1 (336 aa).

The protein resides in the cytoplasm. In terms of biological role, involved in regulation of invasive growth. In Saccharomyces cerevisiae (strain ATCC 204508 / S288c) (Baker's yeast), this protein is Protein DIA1 (DIA1).